Here is a 432-residue protein sequence, read N- to C-terminus: Leucine-rich repeat-containing protein ODA7 (432 aa).

LRR repeat units lie at residues 47–68 (NLKALFLEGNVLETLEGLPPLA), 69–90 (DLKCLYVQQNCIWKISGLEAVP), 91–112 (GLDTLNISNNQLTKLEGLACCP), 113–134 (ALRTLIATHNHLVTLDSVAHLA), and 138–159 (ALQTLDLQNNELEDPGIVDILK). The 39-residue stretch at 173–211 (PVVSNIKNYRKVLVTSIPSLTYLDDRPVFDNERKIAQAW) folds into the LRRCT domain. Positions 212–243 (LEGGLEGERAMRNQLKEEEEERSRKNHEFMMQ) form a coiled coil. Disordered stretches follow at residues 297–332 (RPGEEEPAELASARQGLARDGKPIQEGAWGSGAAAE) and 368–432 (EELD…NDLD). Composition is skewed to low complexity over residues 323 to 332 (GAWGSGAAAE) and 407 to 425 (VAAAKKGAASGAAEGISAA).

This sequence belongs to the DNAAF1 family. As to quaternary structure, interacts with both outer row and I1 inner row dyneins.

The protein localises to the cytoplasm. The protein resides in the cytoskeleton. It localises to the cilium axoneme. Its function is as follows. Cilium-specific protein required for cilia structures. Axonemal dynein-associated protein that participates in a structural link between inner and outer row dyneins. The protein is Leucine-rich repeat-containing protein ODA7 (ODA7) of Chlamydomonas reinhardtii (Chlamydomonas smithii).